The following is a 251-amino-acid chain: Indole-3-glycerol phosphate synthase (251 aa).

Positions 1-12 are enriched in polar residues; it reads MDDSSSLASPVQ. The interval 1 to 27 is disordered; the sequence is MDDSSSLASPVQSILAAARRRDPPTRR.

The protein belongs to the TrpC family.

It carries out the reaction 1-(2-carboxyphenylamino)-1-deoxy-D-ribulose 5-phosphate + H(+) = (1S,2R)-1-C-(indol-3-yl)glycerol 3-phosphate + CO2 + H2O. Its pathway is amino-acid biosynthesis; L-tryptophan biosynthesis; L-tryptophan from chorismate: step 4/5. The sequence is that of Indole-3-glycerol phosphate synthase from Halobacterium salinarum (strain ATCC 700922 / JCM 11081 / NRC-1) (Halobacterium halobium).